Consider the following 300-residue polypeptide: 4-hydroxybenzoate octaprenyltransferase (300 aa).

The next 8 membrane-spanning stretches (helical) occupy residues 32 to 52 (IGTYLLLWPTLWALWLASEGA), 55 to 75 (LKNLFIFVFGVLLMRSAGCVI), 108 to 128 (LFGILVGVSFILVLFTNALTI), 149 to 169 (YLPQVVLGAAFAWGIPMAFAA), 178 to 198 (AWLLYTATVVWTVAYDTMYAM), 222 to 242 (AAVAGLQVLTLGVLFMVGAQH), 246 to 266 (VYYQVSLIIVAVLFVYQQHLI), and 278 to 298 (FLNNHWVGAAVFLGLVLEFLF).

This sequence belongs to the UbiA prenyltransferase family. It depends on Mg(2+) as a cofactor.

It localises to the cell inner membrane. The catalysed reaction is all-trans-octaprenyl diphosphate + 4-hydroxybenzoate = 4-hydroxy-3-(all-trans-octaprenyl)benzoate + diphosphate. The protein operates within cofactor biosynthesis; ubiquinone biosynthesis. Catalyzes the prenylation of para-hydroxybenzoate (PHB) with an all-trans polyprenyl group. Mediates the second step in the final reaction sequence of ubiquinone-8 (UQ-8) biosynthesis, which is the condensation of the polyisoprenoid side chain with PHB, generating the first membrane-bound Q intermediate 3-octaprenyl-4-hydroxybenzoate. The protein is 4-hydroxybenzoate octaprenyltransferase of Hahella chejuensis (strain KCTC 2396).